Consider the following 452-residue polypeptide: uncharacterized protein (452 aa).

One can recognise a TRAM domain in the interval 3–61; the sequence is KVKIGEKYEVDITSMGHEGEGVGRIDGIAVFVKGALKGERVIVEIEEVHKNYLKGYTVK. [4Fe-4S] cluster is bound by residues Cys-74, Cys-80, Cys-83, and Cys-160. The S-adenosyl-L-methionine site is built by Gln-284, Tyr-313, Glu-334, and Asp-382. Cys-409 functions as the Nucleophile in the catalytic mechanism.

This sequence belongs to the class I-like SAM-binding methyltransferase superfamily. RNA M5U methyltransferase family.

This is an uncharacterized protein from Caldanaerobacter subterraneus subsp. tengcongensis (strain DSM 15242 / JCM 11007 / NBRC 100824 / MB4) (Thermoanaerobacter tengcongensis).